Consider the following 89-residue polypeptide: Small ribosomal subunit protein uS15 (89 aa).

Belongs to the universal ribosomal protein uS15 family. As to quaternary structure, part of the 30S ribosomal subunit. Forms a bridge to the 50S subunit in the 70S ribosome, contacting the 23S rRNA.

Its function is as follows. One of the primary rRNA binding proteins, it binds directly to 16S rRNA where it helps nucleate assembly of the platform of the 30S subunit by binding and bridging several RNA helices of the 16S rRNA. Functionally, forms an intersubunit bridge (bridge B4) with the 23S rRNA of the 50S subunit in the ribosome. The chain is Small ribosomal subunit protein uS15 from Lacticaseibacillus casei (strain BL23) (Lactobacillus casei).